Consider the following 143-residue polypeptide: Small ribosomal subunit protein bS6 (143 aa).

Positions 97 to 143 are disordered; sequence DTEQSLIMKSKDEKGDKHERSERRRRDDEEGDVPAATDTDGDNAEAA. Positions 105–124 are enriched in basic and acidic residues; the sequence is KSKDEKGDKHERSERRRRDD.

This sequence belongs to the bacterial ribosomal protein bS6 family.

Its function is as follows. Binds together with bS18 to 16S ribosomal RNA. This chain is Small ribosomal subunit protein bS6, found in Xanthomonas oryzae pv. oryzae (strain MAFF 311018).